The sequence spans 369 residues: tRNA(Met) cytidine acetate ligase (369 aa).

Residues 7–20 (VAEFNPFHNGHKYL), Gly-96, Asn-152, and Arg-175 contribute to the ATP site.

The protein belongs to the TmcAL family.

It is found in the cytoplasm. It carries out the reaction cytidine(34) in elongator tRNA(Met) + acetate + ATP = N(4)-acetylcytidine(34) in elongator tRNA(Met) + AMP + diphosphate. Catalyzes the formation of N(4)-acetylcytidine (ac(4)C) at the wobble position of elongator tRNA(Met), using acetate and ATP as substrates. First activates an acetate ion to form acetyladenylate (Ac-AMP) and then transfers the acetyl group to tRNA to form ac(4)C34. The protein is tRNA(Met) cytidine acetate ligase of Streptococcus agalactiae serotype Ia (strain ATCC 27591 / A909 / CDC SS700).